Reading from the N-terminus, the 256-residue chain is NAP1-related protein 1 (256 aa).

Residues 23-64 (IDAELVLSIEKLQEIQDDLEKINEKASDEVLEVEQKYNVIRK) are a coiled coil. The disordered stretch occupies residues 220–256 (LTYFNNDADEEDFDGDDDGDEEGEEDDDDEEEEDGEE). Positions 226 to 256 (DADEEDFDGDDDGDEEGEEDDDDEEEEDGEE) are enriched in acidic residues.

The protein belongs to the nucleosome assembly protein (NAP) family. Can form homomeric and heteromeric protein complexes with NRP2. Binds histones H2A and H2B and associates with chromatin in vivo. In terms of tissue distribution, ubiquitous.

The protein resides in the cytoplasm. It is found in the nucleus. Functionally, acts as a histone H2A/H2B chaperone in nucleosome assembly, playing a critical role for the correct expression of genes involved in root proliferation and patterning. Required with NRP2 for the maintenance of cell proliferation and differentiation in postembryonic root growth. Involved in both intramolecular and intermolecular somatic homologous recombination. This Arabidopsis thaliana (Mouse-ear cress) protein is NAP1-related protein 1 (NRP1).